The chain runs to 355 residues: Heat-inducible transcription repressor HrcA (355 aa).

The protein belongs to the HrcA family.

Its function is as follows. Negative regulator of class I heat shock genes (grpE-dnaK-dnaJ and groELS operons). Prevents heat-shock induction of these operons. The chain is Heat-inducible transcription repressor HrcA from Nitratidesulfovibrio vulgaris (strain DP4) (Desulfovibrio vulgaris).